The following is a 192-amino-acid chain: Cytochrome b-245 light chain (192 aa).

Residues 2-7 are Cytoplasmic-facing; it reads GQIEWA. The helical transmembrane segment at 8–30 threads the bilayer; sequence MWANEQALASGLILITGGIVATA. Residues 31 to 35 are Extracellular-facing; sequence GRFTQ. A helical transmembrane segment spans residues 36-53; the sequence is WYFGAYSIVAGVLICLLE. Residues 54–69 lie on the Cytoplasmic side of the membrane; sequence YPRGKRKKGSTMERCG. Residues 70 to 80 lie within the membrane without spanning it; that stretch reads QKYLTAVVKLF. Topologically, residues 81–86 are cytoplasmic; that stretch reads GPLTRN. Residues 87-104 traverse the membrane as a helical segment; that stretch reads YYVRAVLHLLLSVPAGFL. Leu-105 is a topological domain (extracellular). Residues 106-126 form a helical membrane-spanning segment; sequence ATILGTVCLAIASVIYLLAAI. Residues 127 to 192 lie on the Cytoplasmic side of the membrane; sequence RGEQWTPIEP…NPIPVTDEVV (66 aa). A disordered region spans residues 134–192; the sequence is IEPKPKERPQVGGTIKQPPTNPPPRPPAEVRKKPSEAEEEAASAGGPQVNPIPVTDEVV. Position 147 is a phosphothreonine (Thr-147). A Glycyl lysine isopeptide (Lys-Gly) (interchain with G-Cter in ubiquitin) cross-link involves residue Lys-149. 2 positions are modified to phosphoserine: Ser-168 and Ser-176.

Belongs to the p22phox family. Component of the phagocyte NADPH oxidase core complex/cytochrome b558 complex, composed of CYBB (heavy chain (beta)) and CYBA (light chain (alpha)). Component of the phagocyte NADPH oxidase complex composed of an obligatory core heterodimer formed by the membrane proteins CYBA and CYBB and the cytosolic regulatory subunits NCF1/p47-phox, NCF2/p67-phox, NCF4/p40-phox and the small GTPase RAC1 or RAC2. Interacts with NCF1 (via SH3 domain). Interacts with SH3PXD2A. Interacts with DUOX1, DUOX2 and TPO. Interacts with NOX4; this interaction mediates superoxide generation. Interacts with calprotectin (S100A8/9). Interacts with GBP7. Interacts with NOXO1. Forms a heterodimer with NOX3 and is essential for activity and cell membrane localization of NOX3. Interacts with NOX1. Post-translationally, phosphorylation at Thr-147 enhances NADPH oxidase activity by promoting NCF1/p47-phox binding. In terms of processing, ubiquitinated at Lys-149 likely by RNF145. As to expression, expressed to a relatively high level in kidney, spleen, thymus and lung, and to a lower level in aorta, adrenals, and heart. Expression is not detected in liver or brain.

It localises to the cell membrane. Subunit of NADPH oxidase complexes that is required for the NADPH oxidase activity that generates, in various cell types, superoxide from molecular oxygen utilizing NADPH as an electron donor. Subunit of the phagocyte NADPH oxidase complex that mediates the transfer of electrons from cytosolic NADPH to O2 to produce the superoxide anion (O2(-)). In the activated complex, electrons are first transferred from NADPH to flavin adenine dinucleotide (FAD) and subsequently transferred via two heme molecules to molecular oxygen, producing superoxide through an outer-sphere reaction. Activation of the NADPH oxidase complex is initiated by the assembly of cytosolic subunits of the NADPH oxidase complex with the core NADPH oxidase complex to form a complex at the plasma membrane or phagosomal membrane. This activation process is initiated by phosphorylation dependent binding of the cytosolic NCF1/p47-phox subunit to the C-terminus of CYBA/p22-phox. Aassociates with NOX3 to form a functional NADPH oxidase constitutively generating superoxide. The chain is Cytochrome b-245 light chain from Rattus norvegicus (Rat).